Reading from the N-terminus, the 1210-residue chain is MSSFSNVGFVPHDGENEEDAINLAPKSSESFPAEDSIFADGSPRHRTLFDSKKRFKLRPPLLASTPRVICRFQQASSGSSAPYFTREPTFQPIQEFIEMSEHFHDITENSQGYRFLNTKEPFSRHHSALHHPRLSFDVLPKVIDFSRRWIGRARDTLYRLSVAYSGQEELGIERARDELDDRREHINLSEIFGGSHSQENSCSSGGVFNLNFDKSIEDRQLSFENIDLDSTSPQSTNDVIWLRDMTTVSTISEPILHPSSKISFTSSSPSPQRNPKNEAQKNSSSKREETSMFRSDPMKLYQMILVKEAAFECVAEIGKHGNVQFVDLNAKMSLYSRTFVKQMRRCEEMERKLRFLEKQVITCKPGLDPKSIDYTDLSAPTQAEMIQLEHKLDQLEREFLDLNNNDYALRKNLNSSKEFLQVMRLVDEFFQVHKEEEAKARFERSATTDDIEMFSKSFGFGGLPSSNEMPLTPLLGSDDNAWFVAGVLPLDKKESFERVLWRACRRTAFVRTSDASFTVNDPVTLEPLQKCVFIVFFKGESLRLIVEKVCDGFNATQYPCPKSSKDRKMKMSETEGRMNDLTVVIDTTQTHRYTILKDMSFEIPIWLKNIQIQKSVFAVMNMFTVDTNGFLAGECWIPAAEEDDVRQALHDGFKASGTEVEPILNELWTNAPPPTFHRTNKFTNVFQSIVDSYGVSQYCEVNPAPYTIITFPFLFAVMFGDAAHGAILLLAALFFIRNERKIESKKIRDEIFNTFYGGRYIMMLMGIFSIYTGFLYNDAFAKSFNVFGSGWSNSYNETQLDWWIARSYRKHREYSLELVPEKSFDIEKTYPFGVDPIWNIADNRLSFLNSMKMKASVIIGITQMTFGVFLSVLNHIHFKSYIDIISNFIPQVIFLSCIFIYLCIQIIVKWIFFSVNAENVFGFEYPGSHCAPSLLIGLINMFMFKKRNEGYLNENGEVYSNCHLGYWYPNQRLVETILISISLACIPIMLFGKPLWVRFVTSKRHKLQENKSLKSLRRNGTTVSAPTSPVVDAGPPRFEDAELLLADELDIGEDIHHSLSDIFVHQAIHTIEFVLGCVSHTASYLRLWALSLAHAQLSEVMWHMVLIQGIHTVDHIENETIAMCLKPVVACVAFFIFASLSLSILIMMEGLSAFLHALRLHWVEFQSKFYLGTGHPFHAFYLKESLENAQLITEETDRLADISSGQHLHI.

At 1–715 (MSSFSNVGFV…YTIITFPFLF (715 aa)) the chain is on the cytoplasmic side. A compositionally biased stretch (low complexity) spans 259–271 (SSKISFTSSSPSP). The segment at 259-292 (SSKISFTSSSPSPQRNPKNEAQKNSSSKREETSM) is disordered. The span at 275-291 (PKNEAQKNSSSKREETS) shows a compositional bias: basic and acidic residues. Positions 339–405 (FVKQMRRCEE…EREFLDLNNN (67 aa)) form a coiled coil. The helical transmembrane segment at 716-736 (AVMFGDAAHGAILLLAALFFI) threads the bilayer. Residues 737–760 (RNERKIESKKIRDEIFNTFYGGRY) lie on the Extracellular side of the membrane. The chain crosses the membrane as a helical span at residues 761-781 (IMMLMGIFSIYTGFLYNDAFA). The Cytoplasmic segment spans residues 782–855 (KSFNVFGSGW…SFLNSMKMKA (74 aa)). The chain crosses the membrane as a helical span at residues 856-876 (SVIIGITQMTFGVFLSVLNHI). Topologically, residues 877–892 (HFKSYIDIISNFIPQV) are extracellular. Residues 893 to 913 (IFLSCIFIYLCIQIIVKWIFF) form a helical membrane-spanning segment. At 914–976 (SVNAENVFGF…WYPNQRLVET (63 aa)) the chain is on the cytoplasmic side. Residues 977-997 (ILISISLACIPIMLFGKPLWV) traverse the membrane as a helical segment. At 998–1127 (RFVTSKRHKL…NETIAMCLKP (130 aa)) the chain is on the extracellular side. N-linked (GlcNAc...) asparagine glycosylation is found at Asn1010, Asn1019, and Asn1118. Residues 1128–1148 (VVACVAFFIFASLSLSILIMM) traverse the membrane as a helical segment. Topologically, residues 1149 to 1210 (EGLSAFLHAL…DISSGQHLHI (62 aa)) are cytoplasmic.

The protein belongs to the V-ATPase 116 kDa subunit family. In terms of assembly, V-ATPase is a heteromultimeric enzyme made up of two complexes: the ATP-hydrolytic V1 complex and the proton translocation V0 complex. The V1 complex consists of three catalytic AB heterodimers that form a heterohexamer, three peripheral stalks each consisting of EG heterodimers, one central rotor including subunits D and F, and the regulatory subunits C and H. The proton translocation complex V0 consists of the proton transport subunit a, a ring of proteolipid subunits c9c'', rotary subunit d, subunits e and f, and the accessory subunits vah-19/Ac45 and vah-20/PRR. Expressed in uterus.

Its subcellular location is the membrane. Its function is as follows. Subunit of the V0 complex of vacuolar(H+)-ATPase (V-ATPase), a multisubunit enzyme composed of a peripheral complex (V1) that hydrolyzes ATP and a membrane integral complex (V0) that translocates protons. V-ATPase is responsible for acidifying and maintaining the pH of intracellular compartments and in some cell types, is targeted to the plasma membrane, where it is responsible for acidifying the extracellular environment. The polypeptide is V-type proton ATPase 116 kDa subunit a 4 (Caenorhabditis elegans).